A 265-amino-acid chain; its full sequence is 3-methyl-2-oxobutanoate hydroxymethyltransferase (265 aa).

The Mg(2+) site is built by D41 and D80. 3-methyl-2-oxobutanoate is bound by residues 41–42, D80, and K110; that span reads DS. Position 112 (E112) interacts with Mg(2+). The Proton acceptor role is filled by E179.

Belongs to the PanB family. As to quaternary structure, homodecamer; pentamer of dimers. Mg(2+) serves as cofactor.

It localises to the cytoplasm. The catalysed reaction is 3-methyl-2-oxobutanoate + (6R)-5,10-methylene-5,6,7,8-tetrahydrofolate + H2O = 2-dehydropantoate + (6S)-5,6,7,8-tetrahydrofolate. It participates in cofactor biosynthesis; (R)-pantothenate biosynthesis; (R)-pantoate from 3-methyl-2-oxobutanoate: step 1/2. Catalyzes the reversible reaction in which hydroxymethyl group from 5,10-methylenetetrahydrofolate is transferred onto alpha-ketoisovalerate to form ketopantoate. This chain is 3-methyl-2-oxobutanoate hydroxymethyltransferase, found in Pseudothermotoga lettingae (strain ATCC BAA-301 / DSM 14385 / NBRC 107922 / TMO) (Thermotoga lettingae).